The following is a 100-amino-acid chain: Small ribosomal subunit protein uS14 (100 aa).

Belongs to the universal ribosomal protein uS14 family. As to quaternary structure, part of the 30S ribosomal subunit. Contacts proteins S3 and S10.

In terms of biological role, binds 16S rRNA, required for the assembly of 30S particles and may also be responsible for determining the conformation of the 16S rRNA at the A site. The chain is Small ribosomal subunit protein uS14 from Prochlorococcus marinus (strain MIT 9215).